The chain runs to 201 residues: Dephospho-CoA kinase (201 aa).

Residues 3–201 enclose the DPCK domain; that stretch reads IIGLTGGMAA…ALLHRLREAS (199 aa). 11-16 serves as a coordination point for ATP; that stretch reads AAGKST.

Belongs to the CoaE family.

The protein resides in the cytoplasm. It carries out the reaction 3'-dephospho-CoA + ATP = ADP + CoA + H(+). Its pathway is cofactor biosynthesis; coenzyme A biosynthesis; CoA from (R)-pantothenate: step 5/5. Its function is as follows. Catalyzes the phosphorylation of the 3'-hydroxyl group of dephosphocoenzyme A to form coenzyme A. The sequence is that of Dephospho-CoA kinase from Gluconobacter oxydans (strain 621H) (Gluconobacter suboxydans).